The primary structure comprises 260 residues: tRNA pseudouridine synthase A (260 aa).

Residue aspartate 51 is the Nucleophile of the active site. Tyrosine 109 contacts substrate.

This sequence belongs to the tRNA pseudouridine synthase TruA family. Homodimer.

The enzyme catalyses uridine(38/39/40) in tRNA = pseudouridine(38/39/40) in tRNA. Its function is as follows. Formation of pseudouridine at positions 38, 39 and 40 in the anticodon stem and loop of transfer RNAs. In Albidiferax ferrireducens (strain ATCC BAA-621 / DSM 15236 / T118) (Rhodoferax ferrireducens), this protein is tRNA pseudouridine synthase A.